We begin with the raw amino-acid sequence, 433 residues long: MALDLRTIFQCEPSENNLGSENSAFQQSQGPAVQREEGISEFSRMVLNSFQDSNNSYARQELQRLYRIFHSWLQPEKHSKDEIISLLVLEQFMIGGHCNDKASVKEKWKSSGKNLERFIEDLTDDSINPPALVHVHMQGQEALFSEDMPLRDVIVHLTKQVNAQTTREANMGTPSQTSQDTSLETGQGYEDEQDGWNSSSKTTRVNENITNQGNQIVSLIIIQEENGPRPEEGGVSSDNPYNSKRAELVTARSQEGSINGITFQGVPMVMGAGCISQPEQSSPESALTHQSNEGNSTCEVHQKGSHGVQKSYKCEECPKVFKYLCHLLAHQRRHRNERPFVCPECQKGFFQISDLRVHQIIHTGKKPFTCSMCKKSFSHKTNLRSHERIHTGEKPYTCPFCKTSYRQSSTYHRHMRTHEKITLPSVPSTPEAS.

Residues 44–126 (RMVLNSFQDS…RFIEDLTDDS (83 aa)) enclose the SCAN box domain. 3 stretches are compositionally biased toward polar residues: residues 165–185 (TTREANMGTPSQTSQDTSLET), 195–210 (GWNSSSKTTRVNENIT), and 277–299 (QPEQSSPESALTHQSNEGNSTCE). 2 disordered regions span residues 165 to 210 (TTRE…ENIT) and 275 to 301 (ISQPEQSSPESALTHQSNEGNSTCEVH). C2H2-type zinc fingers lie at residues 312-334 (YKCEECPKVFKYLCHLLAHQRRH), 340-362 (FVCPECQKGFFQISDLRVHQIIH), 368-390 (FTCSMCKKSFSHKTNLRSHERIH), and 396-418 (YTCPFCKTSYRQSSTYHRHMRTH).

It localises to the nucleus. The protein localises to the chromosome. The protein resides in the telomere. Its function is as follows. Embryonic stem (ES) cell-specific transcription factor required to regulate ES cell pluripotency. Binds telomeres and plays a key role in genomic stability in ES cells by regulating telomere elongation. Acts as an activator of spontaneous telomere sister chromatid exchange (T-SCE) and telomere elongation in undifferentiated ES cells. The polypeptide is Zinc finger and SCAN domain-containing protein 4 (ZSCAN4) (Homo sapiens (Human)).